The following is a 104-amino-acid chain: DCDYTCGSHCYSASAVSDAQSAGYQLYSAGQSVGRSRYPHQYRNYEGFNFPVSGNYYEWPILSSGSTYNGGSPGADRVVFNNNDELAGLITHTGASGNGFVACG.

2 cysteine pairs are disulfide-bonded: cysteine 2–cysteine 10 and cysteine 6–cysteine 103. Histidine 40 is a catalytic residue. Glutamate 58 acts as the Proton acceptor in catalysis. Histidine 92 serves as the catalytic Proton donor.

The protein belongs to the ribonuclease N1/T1 family.

The protein localises to the secreted. The catalysed reaction is [RNA] containing guanosine + H2O = an [RNA fragment]-3'-guanosine-3'-phosphate + a 5'-hydroxy-ribonucleotide-3'-[RNA fragment].. The sequence is that of Guanyl-specific ribonuclease Ap1 from Aspergillus pallidus.